A 206-amino-acid chain; its full sequence is Sclerostin domain-containing protein 1 (206 aa).

The N-terminal stretch at 1–23 is a signal peptide; the sequence is MLPPAIHLSLIPLLCILMKNCLA. The segment at 42 to 62 is disordered; that stretch reads AHPSSNSTLNQARNGGRHFSS. Residues 43–62 are compositionally biased toward polar residues; that stretch reads HPSSNSTLNQARNGGRHFSS. N-linked (GlcNAc...) asparagine glycosylation occurs at Asn-47. 4 disulfides stabilise this stretch: Cys-75-Cys-133, Cys-89-Cys-147, Cys-100-Cys-163, and Cys-104-Cys-165. The CTCK domain maps to 75–170; it reads CRELRSTKYI…TACKCKRYTR (96 aa). N-linked (GlcNAc...) asparagine glycosylation is present at Asn-173. Residues 176–206 are disordered; sequence SHNFESVSPAKPAQHHRERKRASKSSKHSLS. The span at 188–206 shows a compositional bias: basic residues; it reads AQHHRERKRASKSSKHSLS.

The protein belongs to the sclerostin family. Interacts with BMP2, BMP4, BMP6 and BMP7 with high affinity. As to expression, highly expressed within the maximally sensitized/receptive endometrium. Weakly expressed in brain, kidney and the female reproductive tract. Expressed in the dermal papilla (DP) and at high level in the precortex of both anagen vibrissae and pelage follicles. Dynymic expression during the hair cycle.

It localises to the secreted. Its function is as follows. Directly antagonizes activity of BMP2, BMP4, BMP6 and BMP7 in a dose-dependent manner. May be involved in the onset of endometrial receptivity for implantation/sensitization for the decidual cell reaction. Enhances Wnt signaling and inhibits TGF-beta signaling. This chain is Sclerostin domain-containing protein 1 (Sostdc1), found in Rattus norvegicus (Rat).